Reading from the N-terminus, the 520-residue chain is Na(+)/H(+) antiporter NhaB (520 aa).

12 consecutive transmembrane segments (helical) span residues 27–49, 62–82, 97–117, 120–140, 144–164, 202–222, 238–258, 303–323, 348–368, 391–411, 447–467, and 475–495; these read GFLI…LLVI, YPLL…MTSA, LLLI…LLIF, LLLG…AAAF, FLDA…FYGI, LMMH…VGEP, FLLR…VTCI, GLIG…VGLI, TEAL…AVII, LFYL…VGTV, ATPN…APLI, and VWMA…CVQF.

This sequence belongs to the NhaB Na(+)/H(+) (TC 2.A.34) antiporter family.

Its subcellular location is the cell inner membrane. The catalysed reaction is 2 Na(+)(in) + 3 H(+)(out) = 2 Na(+)(out) + 3 H(+)(in). Functionally, na(+)/H(+) antiporter that extrudes sodium in exchange for external protons. This is Na(+)/H(+) antiporter NhaB from Cronobacter sakazakii (strain ATCC BAA-894) (Enterobacter sakazakii).